The primary structure comprises 177 residues: dCTP deaminase, dUMP-forming (177 aa).

Residues 95–100 (RSSLGR), Asp112, 120–122 (TLE), Gln141, Tyr155, and Gln162 contribute to the dCTP site. The Proton donor/acceptor role is filled by Glu122.

It belongs to the dCTP deaminase family. As to quaternary structure, homotrimer.

It carries out the reaction dCTP + 2 H2O = dUMP + NH4(+) + diphosphate. The protein operates within pyrimidine metabolism; dUMP biosynthesis; dUMP from dCTP: step 1/1. In terms of biological role, bifunctional enzyme that catalyzes both the deamination of dCTP to dUTP and the hydrolysis of dUTP to dUMP without releasing the toxic dUTP intermediate. This Hydrogenobaculum sp. (strain Y04AAS1) protein is dCTP deaminase, dUMP-forming.